The following is a 200-amino-acid chain: Large ribosomal subunit protein bL25 (200 aa).

The protein belongs to the bacterial ribosomal protein bL25 family. CTC subfamily. As to quaternary structure, part of the 50S ribosomal subunit; part of the 5S rRNA/L5/L18/L25 subcomplex. Contacts the 5S rRNA. Binds to the 5S rRNA independently of L5 and L18.

In terms of biological role, this is one of the proteins that binds to the 5S RNA in the ribosome where it forms part of the central protuberance. The protein is Large ribosomal subunit protein bL25 of Pseudomonas fluorescens (strain Pf0-1).